A 535-amino-acid chain; its full sequence is 2-isopropylmalate synthase (535 aa).

The region spanning 13-274 is the Pyruvate carboxyltransferase domain; that stretch reads VLIFDTTLRD…YFNPFLGRPP (262 aa). Positions 22, 213, 215, and 249 each coordinate Mn(2+). A regulatory domain region spans residues 414–535; that stretch reads QLEFVQVSCG…LEQRALHPQA (122 aa).

This sequence belongs to the alpha-IPM synthase/homocitrate synthase family. LeuA type 1 subfamily. Homodimer. The cofactor is Mn(2+).

Its subcellular location is the cytoplasm. The catalysed reaction is 3-methyl-2-oxobutanoate + acetyl-CoA + H2O = (2S)-2-isopropylmalate + CoA + H(+). It functions in the pathway amino-acid biosynthesis; L-leucine biosynthesis; L-leucine from 3-methyl-2-oxobutanoate: step 1/4. Its function is as follows. Catalyzes the condensation of the acetyl group of acetyl-CoA with 3-methyl-2-oxobutanoate (2-ketoisovalerate) to form 3-carboxy-3-hydroxy-4-methylpentanoate (2-isopropylmalate). This is 2-isopropylmalate synthase from Thermosynechococcus vestitus (strain NIES-2133 / IAM M-273 / BP-1).